Here is a 363-residue protein sequence, read N- to C-terminus: MKKFTLLLLCFVLPMTSAYAARIKDVAQVAGVRSNQLVGYGLVSGLPGTGESTPFTEQSFAAMLQNFGIQLPAGTKPKIKNVAAVMVTAELPPFSKPGQQIDVTVSSIGSAKSLRGGTLLQTFLKGLDGQVYAVAQGNLVVSGFSAEGADGSKIVGNNPTVGIISSGAMVEREVPTPFGRGDFITFNLLESDFTTAQRMADAVNNFLGPQMASAVDATSVRVRAPRDISQRVAFLSAIENLEFDPADGAAKIIVNSRTGTIVVGKHVRLKPAAVTHGGMTVAIKENLSVSQPNGFSGGETVVVPNSDISVTEEQGKMFKFEPGLTLDDLVRAVNQVGAAPSDLMAILQALKQAGAIEGQLIII.

A signal peptide spans 1-20 (MKKFTLLLLCFVLPMTSAYA).

It belongs to the FlgI family. The basal body constitutes a major portion of the flagellar organelle and consists of four rings (L,P,S, and M) mounted on a central rod.

It is found in the periplasm. Its subcellular location is the bacterial flagellum basal body. Functionally, assembles around the rod to form the L-ring and probably protects the motor/basal body from shearing forces during rotation. This is Flagellar P-ring protein from Vibrio vulnificus (strain YJ016).